The following is a 448-amino-acid chain: Exodeoxyribonuclease 7 large subunit (448 aa).

This sequence belongs to the XseA family. In terms of assembly, heterooligomer composed of large and small subunits.

It localises to the cytoplasm. It carries out the reaction Exonucleolytic cleavage in either 5'- to 3'- or 3'- to 5'-direction to yield nucleoside 5'-phosphates.. In terms of biological role, bidirectionally degrades single-stranded DNA into large acid-insoluble oligonucleotides, which are then degraded further into small acid-soluble oligonucleotides. The sequence is that of Exodeoxyribonuclease 7 large subunit from Tolumonas auensis (strain DSM 9187 / NBRC 110442 / TA 4).